The sequence spans 413 residues: Multifunctional CCA protein (413 aa).

2 residues coordinate ATP: glycine 8 and arginine 11. Residues glycine 8 and arginine 11 each coordinate CTP. Positions 21 and 23 each coordinate Mg(2+). ATP contacts are provided by arginine 91, arginine 143, and arginine 146. The CTP site is built by arginine 91, arginine 143, and arginine 146. The 102-residue stretch at 232 to 333 (TGVHVMMVID…VRLLERADAL (102 aa)) folds into the HD domain.

It belongs to the tRNA nucleotidyltransferase/poly(A) polymerase family. Bacterial CCA-adding enzyme type 1 subfamily. Monomer. Can also form homodimers and oligomers. It depends on Mg(2+) as a cofactor. Requires Ni(2+) as cofactor.

It carries out the reaction a tRNA precursor + 2 CTP + ATP = a tRNA with a 3' CCA end + 3 diphosphate. The enzyme catalyses a tRNA with a 3' CCA end + 2 CTP + ATP = a tRNA with a 3' CCACCA end + 3 diphosphate. Functionally, catalyzes the addition and repair of the essential 3'-terminal CCA sequence in tRNAs without using a nucleic acid template. Adds these three nucleotides in the order of C, C, and A to the tRNA nucleotide-73, using CTP and ATP as substrates and producing inorganic pyrophosphate. tRNA 3'-terminal CCA addition is required both for tRNA processing and repair. Also involved in tRNA surveillance by mediating tandem CCA addition to generate a CCACCA at the 3' terminus of unstable tRNAs. While stable tRNAs receive only 3'-terminal CCA, unstable tRNAs are marked with CCACCA and rapidly degraded. This Burkholderia mallei (strain NCTC 10247) protein is Multifunctional CCA protein.